The primary structure comprises 85 residues: UPF0297 protein LBA0418 (85 aa).

The protein belongs to the UPF0297 family.

The chain is UPF0297 protein LBA0418 from Lactobacillus acidophilus (strain ATCC 700396 / NCK56 / N2 / NCFM).